The primary structure comprises 278 residues: HTH-type transcriptional activator RhaS (278 aa).

One can recognise an HTH araC/xylS-type domain in the interval 174-272 (NLLLAWLEDH…NWSPRDIRQG (99 aa)). 2 consecutive DNA-binding regions (H-T-H motif) follow at residues 191-212 (DAVADQFSLSLRTLHRQLKQQT) and 239-262 (VTDIAYRCGFSDSNHFSTLFRREF).

As to quaternary structure, binds DNA as a dimer.

It localises to the cytoplasm. Activates expression of the rhaBAD and rhaT operons. In Escherichia coli (strain SMS-3-5 / SECEC), this protein is HTH-type transcriptional activator RhaS.